Consider the following 348-residue polypeptide: Tocopherol O-methyltransferase, chloroplastic (348 aa).

The transit peptide at 1–51 directs the protein to the chloroplast; it reads MKATLAAPSSLTSLPYRTNSSFGSKSSLLFRSPSSSSSVSMTTTRGNVAVA. Ala-52 bears the N-acetylalanine mark. Residues 130–139 form an SAM motif I region; sequence VVDVGCGIGG. Residues 193 to 201 form an SAM motif II region; the sequence is GKFDLVWSM. Residues 220–229 are SAM motif III; the sequence is VAAPGGRIII.

This sequence belongs to the class I-like SAM-binding methyltransferase superfamily. gTMT family.

Its subcellular location is the plastid. It is found in the chloroplast. It catalyses the reaction gamma-tocopherol + S-adenosyl-L-methionine = (+)-alpha-tocopherol + S-adenosyl-L-homocysteine + H(+). The catalysed reaction is delta-tocotrienol + S-adenosyl-L-methionine = beta-tocotrienol + S-adenosyl-L-homocysteine + H(+). It carries out the reaction gamma-tocotrienol + S-adenosyl-L-methionine = alpha-tocotrienol + S-adenosyl-L-homocysteine + H(+). The enzyme catalyses delta-tocopherol + S-adenosyl-L-methionine = beta-tocopherol + S-adenosyl-L-homocysteine + H(+). Its pathway is cofactor biosynthesis; tocopherol biosynthesis. Functionally, involved in the synthesis of tocopherol (vitamin E). Methylates gamma- and delta-tocopherol to form beta- and alpha-tocopherol, respectively. This chain is Tocopherol O-methyltransferase, chloroplastic (VTE4), found in Arabidopsis thaliana (Mouse-ear cress).